The sequence spans 193 residues: Achaete-scute homolog 2 (193 aa).

Disordered stretches follow at residues 1 to 58 (MDSR…RNER) and 128 to 177 (PLPR…GALS). A bHLH domain is found at 50–102 (AAVARRNERERNRVKLVNLGFQALRQHVPHGGASKKLSKVETLRSAVEYIRAL). A compositionally biased stretch (low complexity) spans 128-152 (PLPRAPSGTPATAASPSCASSSPGR).

Efficient DNA binding requires dimerization with another basic helix-loop-helix (bHLH) protein. Forms heterodimers with bHLH transcription factor TCF3. May not heterodimerise with bHLH protein HAND1. In terms of tissue distribution, expressed in placenta.

The protein resides in the nucleus. In terms of biological role, transcription factor. Binds to E-box motifs 5'-CANNTG-3' in the regulatory elements of target genes, probably as a heterodimer with another basic helix-loop-helix (bHLH) protein such as the transcription factor TCF3. May bind both open and closed chromatin, acting as a pioneer transcription factor to allow other factors to bind and activate lineage-specific genes. Required during post-implantation development for the generation of some differentiated trophoblast cell types. Transcriptional activity of ASCL2 may be antagonised in a subset of trophoblast cells by bHLH transcription factor HAND1, perhaps by competing for dimerization with other bHLH proteins. Involved in differentiation and function of follicular T-helper (Tfh) cells, thereby playing a role in germinal center responses; probably modulates expression of genes involved in Tfh cell function, such as BCL6. May also act as a suppressor of Th1-, Th2- and Th17-cell differentiation. Induces the formation of stem cells in intestinal crypts in vitro, synergistically activating transcription of target genes, such as SOX9, together with TCF4/beta-catenin. May form a bistable transcriptional switch, controlling expression of its own gene together with Wnt/R-spondin signaling, and thereby maintaining stem cell characteristics. Modulates expression of target genes, including perhaps down-regulating EGR1/Krox24 and chemokine CXCL10/Mob-1 and up-regulating CXCR4 and CDKN1C/p57kip2, in Schwann cells. May play a role in reducing proliferation of Schwann cells, perhaps acting via modulation of expression of CDKN1C. May be dispensable for blastocyst formation and later embryonic function. May be involved in the determination of neuronal precursors. The chain is Achaete-scute homolog 2 (ASCL2) from Bos taurus (Bovine).